Reading from the N-terminus, the 154-residue chain is Ribonuclease HI (154 aa).

Positions 1–142 (MTKHVEIFTD…CDELARTAAE (142 aa)) constitute an RNase H type-1 domain. Asp-10, Glu-48, Asp-70, and Asp-134 together coordinate Mg(2+).

Belongs to the RNase H family. Monomer. Mg(2+) is required as a cofactor.

Its subcellular location is the cytoplasm. The catalysed reaction is Endonucleolytic cleavage to 5'-phosphomonoester.. Endonuclease that specifically degrades the RNA of RNA-DNA hybrids. This Vibrio parahaemolyticus serotype O3:K6 (strain RIMD 2210633) protein is Ribonuclease HI.